Consider the following 41-residue polypeptide: Large ribosomal subunit protein bL36 (41 aa).

This sequence belongs to the bacterial ribosomal protein bL36 family.

The protein is Large ribosomal subunit protein bL36 of Paracoccus denitrificans (strain Pd 1222).